The chain runs to 103 residues: Large ribosomal subunit protein uL24 (103 aa).

The protein belongs to the universal ribosomal protein uL24 family. Part of the 50S ribosomal subunit.

In terms of biological role, one of two assembly initiator proteins, it binds directly to the 5'-end of the 23S rRNA, where it nucleates assembly of the 50S subunit. One of the proteins that surrounds the polypeptide exit tunnel on the outside of the subunit. The protein is Large ribosomal subunit protein uL24 of Mannheimia succiniciproducens (strain KCTC 0769BP / MBEL55E).